The sequence spans 266 residues: Tryptophan synthase alpha chain (266 aa).

Residues Glu-49 and Asp-60 each act as proton acceptor in the active site.

Belongs to the TrpA family. In terms of assembly, tetramer of two alpha and two beta chains.

It carries out the reaction (1S,2R)-1-C-(indol-3-yl)glycerol 3-phosphate + L-serine = D-glyceraldehyde 3-phosphate + L-tryptophan + H2O. The protein operates within amino-acid biosynthesis; L-tryptophan biosynthesis; L-tryptophan from chorismate: step 5/5. Functionally, the alpha subunit is responsible for the aldol cleavage of indoleglycerol phosphate to indole and glyceraldehyde 3-phosphate. The protein is Tryptophan synthase alpha chain of Chloroflexus aurantiacus (strain ATCC 29364 / DSM 637 / Y-400-fl).